A 173-amino-acid chain; its full sequence is MRLTSKGRYAVTAMLDVALHSQQNPVPLADISERQGISLSYLEQLFSKLRKAGLVASVRGPGGGYRLGMDSYAISIGTVIAAVDESVDATKCNGKGDCQGGTRCLTHTLWRDLSSRITDFLNNITLGELMMDNEVLEVSDRQDLHLAVSQRVSQNNSNTVTIGAAPFGINVRS.

The HTH rrf2-type domain maps to 2–131; that stretch reads RLTSKGRYAV…NNITLGELMM (130 aa). The segment at residues 28-51 is a DNA-binding region (H-T-H motif); the sequence is LADISERQGISLSYLEQLFSKLRK. Residues cysteine 92, cysteine 98, and cysteine 104 each contribute to the [2Fe-2S] cluster site.

The cofactor is [2Fe-2S] cluster.

Its function is as follows. Regulates the transcription of several operons and genes involved in the biogenesis of Fe-S clusters and Fe-S-containing proteins. The sequence is that of HTH-type transcriptional regulator IscR from Vibrio cholerae serotype O1 (strain ATCC 39315 / El Tor Inaba N16961).